Here is a 466-residue protein sequence, read N- to C-terminus: Na(+)/H(+) antiporter NhaA (466 aa).

Transmembrane regions (helical) follow at residues 32-52 (VGGVLLLLAAITALIWANVPA), 74-94 (LSVQHWAADGLLAVFFFVAGI), 111-131 (AALPVAAALCGMAVPALVYTL), 142-162 (GWAVPTATDIAFALAVLAVIG), 172-192 (FLLTLAVVDDLFAILIIAVFF), 195-215 (DLNFAALAGAVIGLAVFWLLL), 221-241 (GWYVYVPLALVIWGLMYNSGI), 280-300 (GLAVPLFALFSAGVVISGGAL), 310-330 (LGVVLGLVVGKAIGIFGGTWL), 348-368 (VFAVASLAGIGFTVSLLIGEL), and 379-399 (EVKAAVLTGSLLAALIATTLL).

The protein belongs to the NhaA Na(+)/H(+) (TC 2.A.33) antiporter family.

Its subcellular location is the cell membrane. The enzyme catalyses Na(+)(in) + 2 H(+)(out) = Na(+)(out) + 2 H(+)(in). Its function is as follows. Na(+)/H(+) antiporter that extrudes sodium in exchange for external protons. The protein is Na(+)/H(+) antiporter NhaA of Streptomyces avermitilis (strain ATCC 31267 / DSM 46492 / JCM 5070 / NBRC 14893 / NCIMB 12804 / NRRL 8165 / MA-4680).